Consider the following 248-residue polypeptide: Triosephosphate isomerase (248 aa).

9-11 (NWK) provides a ligand contact to substrate. The Electrophile role is filled by H94. E166 acts as the Proton acceptor in catalysis. Substrate-binding positions include G172, S211, and 232–233 (GG).

It belongs to the triosephosphate isomerase family. Homodimer.

Its subcellular location is the cytoplasm. The enzyme catalyses D-glyceraldehyde 3-phosphate = dihydroxyacetone phosphate. The protein operates within carbohydrate biosynthesis; gluconeogenesis. It functions in the pathway carbohydrate degradation; glycolysis; D-glyceraldehyde 3-phosphate from glycerone phosphate: step 1/1. Its function is as follows. Involved in the gluconeogenesis. Catalyzes stereospecifically the conversion of dihydroxyacetone phosphate (DHAP) to D-glyceraldehyde-3-phosphate (G3P). This Vesicomyosocius okutanii subsp. Calyptogena okutanii (strain HA) protein is Triosephosphate isomerase.